Consider the following 407-residue polypeptide: Substance-P receptor (407 aa).

Residues 1–31 (MDNVLPVDSDLFPNISTNTSEPNQFVQPAWQ) are Extracellular-facing. 2 N-linked (GlcNAc...) asparagine glycosylation sites follow: N14 and N18. The chain crosses the membrane as a helical span at residues 32-54 (IVLWAAAYTVIVVTSVVGNVVVM). At 55-64 (WIILAHKRMR) the chain is on the cytoplasmic side. Residues 65–86 (TVTNYFLVNLAFAEASMAAFNT) traverse the membrane as a helical segment. Residues 87 to 106 (VVNFTYAVHNEWYYGLFYCK) lie on the Extracellular side of the membrane. A disulfide bond links C105 and C180. The helical transmembrane segment at 107 to 128 (FHNFFPIAAVFASIYSMTAVAF) threads the bilayer. Topologically, residues 129–148 (DRYMAIIHPLQPRLSATATK) are cytoplasmic. A helical membrane pass occupies residues 149–169 (VVICVIWVLALLLAFPQGYYS). At 170-194 (TTETMPGRVVCMIEWPSHPDKIYEK) the chain is on the extracellular side. Residues 195 to 219 (VYHICVTVLIYFLPLLVIGYAYTVV) form a helical membrane-spanning segment. Residues 220–248 (GITLWASEIPGDSSDRYHEQVSAKRKVVK) are Cytoplasmic-facing. Residues 249–270 (MMIVVVCTFAICWLPFHIFFLL) form a helical membrane-spanning segment. Topologically, residues 271–283 (PYINPDLYLKKFI) are extracellular. Residues 284-308 (QQVYLAIMWLAMSSTMYNPIIYCCL) form a helical membrane-spanning segment. Over 309–407 (NDRFRLGFKH…SSSFYSNMLS (99 aa)) the chain is Cytoplasmic. C322 carries S-palmitoyl cysteine lipidation. Residues 363 to 407 (GAHEEDPEEGPKATPSSLDLTSNGSSRSNSKTVTESSSFYSNMLS) form a disordered region. A compositionally biased stretch (polar residues) spans 376–407 (TPSSLDLTSNGSSRSNSKTVTESSSFYSNMLS).

Belongs to the G-protein coupled receptor 1 family. Interacts with ARRB1.

The protein localises to the cell membrane. In terms of biological role, this is a receptor for the tachykinin neuropeptide substance P. It is probably associated with G proteins that activate a phosphatidylinositol-calcium second messenger system. The rank order of affinity of this receptor to tachykinins is: substance P &gt; substance K &gt; neuromedin-K. This is Substance-P receptor (TACR1) from Cavia porcellus (Guinea pig).